We begin with the raw amino-acid sequence, 242 residues long: Transcriptional regulatory protein btr (242 aa).

The 74-residue stretch at 158 to 231 (MRSEQRLAAF…QREVRLIDLP (74 aa)) folds into the HTH crp-type domain. Positions 191 to 210 (REEIGNYLGLTLETVSRLFS) form a DNA-binding region, H-T-H motif.

May regulate gene expression in response to changes in oxygen levels or to changes in the redox potential of the bacterial environment. This chain is Transcriptional regulatory protein btr (btr), found in Bordetella pertussis (strain Tohama I / ATCC BAA-589 / NCTC 13251).